The sequence spans 348 residues: N-acetyl-gamma-glutamyl-phosphate reductase (348 aa).

Residue Cys-151 is part of the active site.

The protein belongs to the NAGSA dehydrogenase family. Type 1 subfamily.

It localises to the cytoplasm. The catalysed reaction is N-acetyl-L-glutamate 5-semialdehyde + phosphate + NADP(+) = N-acetyl-L-glutamyl 5-phosphate + NADPH + H(+). It functions in the pathway amino-acid biosynthesis; L-arginine biosynthesis; N(2)-acetyl-L-ornithine from L-glutamate: step 3/4. Catalyzes the NADPH-dependent reduction of N-acetyl-5-glutamyl phosphate to yield N-acetyl-L-glutamate 5-semialdehyde. The polypeptide is N-acetyl-gamma-glutamyl-phosphate reductase (Lachnospira eligens (strain ATCC 27750 / DSM 3376 / VPI C15-48 / C15-B4) (Eubacterium eligens)).